Consider the following 1229-residue polypeptide: Putative cell division cycle ATPase (1229 aa).

Over residues 252-267 (GKKNNNGNVKKGIKNV) the composition is skewed to low complexity. Residues 252–315 (GKKNNNGNVK…GGKNNSYYNE (64 aa)) are disordered. Over residues 268–281 (PMDEKSYSPNDHDN) the composition is skewed to basic and acidic residues. Residues 282-314 (NSNNSNNNNNNDNNNSNNNNNNNNGGKNNSYYN) show a composition bias toward low complexity. Residue 568 to 575 (GIPGTGKT) coordinates ATP. 2 disordered regions span residues 814 to 837 (TLLQ…DALD) and 860 to 892 (FSND…KNER). Basic and acidic residues-rich tracts occupy residues 819–837 (DKNE…DALD) and 882–892 (NPNDKLDKNER). 975-982 (GPPGCGKT) is a binding site for ATP.

This sequence belongs to the AAA ATPase family.

The chain is Putative cell division cycle ATPase from Plasmodium falciparum (isolate 3D7).